The chain runs to 883 residues: Serine/threonine-protein kinase greatwall (883 aa).

The residue at position 1 (Met-1) is an N-acetylmethionine. The segment at 1–23 is disordered; that stretch reads MEPTMGGEMESGGGAATGECVNR. The Protein kinase domain maps to 35-839; it reads FTIVKPISRG…MKELKHHPLF (805 aa). Residues 41–49 and Lys-62 contribute to the ATP site; that span reads ISRGAFGKV. Asp-156 (proton acceptor) is an active-site residue. A phosphothreonine mark is found at Thr-209 and Thr-224. A Phosphoserine modification is found at Ser-295. The disordered stretch occupies residues 298–317; that stretch reads RLATSSTSSPSHTFISSMES. Over residues 301–314 the composition is skewed to low complexity; it reads TSSTSSPSHTFISS. A phosphoserine mark is found at Ser-373 and Ser-456. Residues 511 to 530 are disordered; sequence ENVGSSFTDKHQTPEKSPVP. A Phosphothreonine modification is found at Thr-523. Residues Ser-556 and Ser-560 each carry the phosphoserine modification. Positions 569–597 are disordered; sequence IHMDSDSSFPGISIMESPLGGQSLDPDKN. Residues Ser-635, Ser-661, and Ser-672 each carry the phosphoserine modification. The interval 706–737 is disordered; that stretch reads RSDMPYQQTPNQVKSETPYRTPKSVRRGAAPV. The segment covering 710–720 has biased composition (polar residues); it reads PYQQTPNQVKS. Position 726 is a phosphothreonine (Thr-726). At Ser-729 the chain carries Phosphoserine. Thr-745 carries the post-translational modification Phosphothreonine; by CDK1. The AGC-kinase C-terminal domain occupies 840 to 883; that stretch reads SGVDWENLQHQKMPFIPQPDDETDTSYFEARNNAQHLTVSGFSL. A phosphoserine mark is found at Ser-879 and Ser-882.

This sequence belongs to the protein kinase superfamily. AGC Ser/Thr protein kinase family. Phosphorylation at Thr-745 by CDK1 during M phase activates its kinase activity. Maximum phosphorylation occurs in prometaphase.

It is found in the cytoplasm. Its subcellular location is the cytoskeleton. The protein localises to the microtubule organizing center. It localises to the centrosome. The protein resides in the nucleus. The enzyme catalyses L-seryl-[protein] + ATP = O-phospho-L-seryl-[protein] + ADP + H(+). It catalyses the reaction L-threonyl-[protein] + ATP = O-phospho-L-threonyl-[protein] + ADP + H(+). Serine/threonine kinase that plays a key role in M phase by acting as a regulator of mitosis entry and maintenance. Acts by promoting the inactivation of protein phosphatase 2A (PP2A) during M phase: does not directly inhibit PP2A but acts by mediating phosphorylation and subsequent activation of ARPP19 and ENSA at 'Ser-62' and 'Ser-67', respectively. ARPP19 and ENSA are phosphatase inhibitors that specifically inhibit the PPP2R2D (PR55-delta) subunit of PP2A. Inactivation of PP2A during M phase is essential to keep cyclin-B1-CDK1 activity high. Following DNA damage, it is also involved in checkpoint recovery by being inhibited. In Bos taurus (Bovine), this protein is Serine/threonine-protein kinase greatwall (MASTL).